The following is a 391-amino-acid chain: RAB6A-GEF complex partner protein 2 (391 aa).

The protein belongs to the RGP1 family. Forms a complex with RIC1; the interaction enhances RAB6A GTPase activity. Interacts with RIC1. Interacts with RAB6A; the interaction is direct with a preference for RAB6A-GDP. Interacts with RAB33B.

The protein resides in the cytoplasm. The protein localises to the cytosol. Its subcellular location is the membrane. The RIC1-RGP1 complex acts as a guanine nucleotide exchange factor (GEF), which activates RAB6A by exchanging bound GDP for free GTP and may thereby required for efficient fusion of endosome-derived vesicles with the Golgi compartment. The RIC1-RGP1 complex participates in the recycling of mannose-6-phosphate receptors. This is RAB6A-GEF complex partner protein 2 from Homo sapiens (Human).